The primary structure comprises 170 residues: Cyclic pyranopterin monophosphate synthase 1 (170 aa).

Substrate-binding positions include 79–81 (LCH) and 116–117 (ME). D131 is an active-site residue.

It belongs to the MoaC family. Homohexamer; trimer of dimers.

It catalyses the reaction (8S)-3',8-cyclo-7,8-dihydroguanosine 5'-triphosphate = cyclic pyranopterin phosphate + diphosphate. The protein operates within cofactor biosynthesis; molybdopterin biosynthesis. Its function is as follows. Catalyzes the conversion of (8S)-3',8-cyclo-7,8-dihydroguanosine 5'-triphosphate to cyclic pyranopterin monophosphate (cPMP). The sequence is that of Cyclic pyranopterin monophosphate synthase 1 (moaC1) from Mycobacterium bovis (strain ATCC BAA-935 / AF2122/97).